A 108-amino-acid polypeptide reads, in one-letter code: Succinate dehydrogenase assembly factor 4, mitochondrial (108 aa).

A mitochondrion-targeting transit peptide spans 1–20; sequence MTPSRLPWLLSWVSATAWRA. The tract at residues 31-108 is disordered; sequence RKTSSSQGGK…WERKGRCIDF (78 aa). 2 stretches are compositionally biased toward basic and acidic residues: residues 52–87 and 95–108; these read KLPE…EKGG and RYGD…CIDF.

The protein belongs to the SDHAF4 family. In terms of assembly, interacts with SDHA in its FAD-bound form.

It is found in the mitochondrion matrix. Its function is as follows. Plays an essential role in the assembly of succinate dehydrogenase (SDH), an enzyme complex (also referred to as respiratory complex II) that is a component of both the tricarboxylic acid (TCA) cycle and the mitochondrial electron transport chain, and which couples the oxidation of succinate to fumarate with the reduction of ubiquinone (coenzyme Q) to ubiquinol. Binds to the flavoprotein subunit SDHA in its FAD-bound form, blocking the generation of excess reactive oxygen species (ROS) and facilitating its assembly with the iron-sulfur protein subunit SDHB into the SDH catalytic dimer. The protein is Succinate dehydrogenase assembly factor 4, mitochondrial of Homo sapiens (Human).